Consider the following 1190-residue polypeptide: Plakophilin-4 (1190 aa).

Residues 1 to 32 (MPAPEQGSLVEEGQPQTHQEAVSTGPGMEPET) form a disordered region. A coiled-coil region spans residues 36–63 (TILASVKEQELQFQRLTRELEVERQIVA). A disordered region spans residues 73-347 (AESPSIASTS…KRSGMTAVPQ (275 aa)). Position 75 is a phosphoserine (serine 75). Over residues 77 to 86 (SIASTSSTEK) the composition is skewed to polar residues. Threonine 84 is subject to Phosphothreonine. Phosphoserine is present on residues serine 106, serine 132, serine 136, and serine 139. 3 stretches are compositionally biased toward polar residues: residues 138–156 (GSLG…SDSG), 163–203 (FHNS…QPSV), and 213–229 (SVPS…STGV). Phosphoserine is present on residues serine 220, serine 230, and serine 235. Positions 230–241 (SPSRGSLRTSLG) are enriched in low complexity. Residues 247 to 266 (PSVTDSRPLNPSAYSSSTLP) are compositionally biased toward polar residues. Omega-N-methylarginine is present on residues arginine 253 and arginine 269. A phosphoserine mark is found at serine 272, serine 280, serine 313, serine 326, and serine 336. The segment covering 289–323 (SVTSRQTSNPNGPVPQYQTTTRVGSPLTLTDAQTR) has biased composition (polar residues). Over residues 324-337 (VASPSQGQVGSSSP) the composition is skewed to low complexity. At tyrosine 371 the chain carries Phosphotyrosine. Phosphoserine is present on residues serine 391, serine 402, and serine 405. Phosphothreonine is present on threonine 411. Tyrosine 414 carries the phosphotyrosine modification. Residues serine 421, serine 426, and serine 437 each carry the phosphoserine modification. Tyrosine 477 carries the post-translational modification Phosphotyrosine. Phosphoserine occurs at positions 509, 511, and 514. ARM repeat units lie at residues 517 to 556 (KDPR…HLCF), 559 to 598 (NKVK…NLVF), and 603 to 643 (DENK…NLSS). Positions 772 to 781 (GKESPSKDSE) are enriched in basic and acidic residues. The tract at residues 772 to 809 (GKESPSKDSEPSCWGKKKKKKKRTPQEDQWDGVGPIPG) is disordered. Serine 775 bears the Phosphoserine mark. An ARM 4 repeat occupies 861 to 900 (AYIRAAVRKEKGLPILVELLRMDNDRVVSSVATALRNMAL). Phosphothreonine is present on residues threonine 1012 and threonine 1016. A phosphoserine mark is found at serine 1044, serine 1090, serine 1099, and serine 1133.

This sequence belongs to the beta-catenin family. Interacts (via the C-terminus) with FRMPD2 (via the PDZ 2 domain). Interacts with PDZD2. Interacts with RHOA; the interaction is detected at the midbody. Interacts with ECT2; the interaction is detected at the midbody. Interacts with CCDC85B.

It is found in the cell junction. The protein localises to the desmosome. It localises to the cytoplasm. Its subcellular location is the cytoskeleton. The protein resides in the spindle. It is found in the spindle pole. The protein localises to the midbody. It localises to the cell membrane. In terms of biological role, plays a role as a regulator of Rho activity during cytokinesis. May play a role in junctional plaques. The protein is Plakophilin-4 (Pkp4) of Mus musculus (Mouse).